The primary structure comprises 400 residues: Argininosuccinate synthase (400 aa).

10-18 (AFSGGLDTT) lines the ATP pocket. Position 87 (Y87) interacts with L-citrulline. G117 contacts ATP. Residues T119, N123, and D124 each contribute to the L-aspartate site. N123 provides a ligand contact to L-citrulline. L-citrulline is bound by residues R127, S173, S182, E255, and Y267.

It belongs to the argininosuccinate synthase family. Type 1 subfamily. As to quaternary structure, homotetramer.

It is found in the cytoplasm. It carries out the reaction L-citrulline + L-aspartate + ATP = 2-(N(omega)-L-arginino)succinate + AMP + diphosphate + H(+). It functions in the pathway amino-acid biosynthesis; L-arginine biosynthesis; L-arginine from L-ornithine and carbamoyl phosphate: step 2/3. The sequence is that of Argininosuccinate synthase from Natronomonas pharaonis (strain ATCC 35678 / DSM 2160 / CIP 103997 / JCM 8858 / NBRC 14720 / NCIMB 2260 / Gabara) (Halobacterium pharaonis).